The chain runs to 309 residues: MSEINISAVAVKELREKTGAGMMDCKKALIETSGNFEEAIDFLRKKGLAAAAKKAGRIASEGLTAAKVDGLTGVVIEVNSETDFVARNEQFQDLVKEIANLAVIAKTIDTLKTFKMQSGKSVEEEVIENIATIGENLTLRRMDVLEISEGAIGSYVHNEVVPNLGKISVLVGLVSNAKDKAKLEALAKQIAVHVAGNNPQSIDDSSLDQALVERERKVFFEKSKEEGKPDNIIAKMVEGRIRKFFSEVVLLQQNFLFEPKLTVAEVIKNAEKELGAEIKIAKFIRYELGEGIEHEEKNFADEVAAITQG.

The involved in Mg(2+) ion dislocation from EF-Tu stretch occupies residues 82–85 (TDFV).

The protein belongs to the EF-Ts family.

It is found in the cytoplasm. In terms of biological role, associates with the EF-Tu.GDP complex and induces the exchange of GDP to GTP. It remains bound to the aminoacyl-tRNA.EF-Tu.GTP complex up to the GTP hydrolysis stage on the ribosome. This Rickettsia rickettsii (strain Iowa) protein is Elongation factor Ts.